A 919-amino-acid polypeptide reads, in one-letter code: MLX-interacting protein (919 aa).

The segment at 1 to 72 is disordered; the sequence is MAADVFMCSP…AGPGREEPPR (72 aa). A2 carries the N-acetylalanine modification. Phosphoserine is present on residues S9, S27, S33, and S39. Residues 27–37 are compositionally biased toward acidic residues; the sequence is SEDDDDSDTDE. Over residues 44 to 56 the composition is skewed to low complexity; sequence SGAATPARAHASA. A required for cytoplasmic localization region spans residues 73 to 327; the sequence is RQQIIHSGHF…PLQPNLDFMD (255 aa). Positions 322–445 are transactivation domain; the sequence is NLDFMDTFEP…LLSPSPAPPP (124 aa). Disordered stretches follow at residues 542 to 562 and 633 to 712; these read KPVSLTGGRPKQPHKIVPAPK and DLGH…SDPK. Position 669 is a phosphoserine (S669). Residues 670–685 are compositionally biased toward polar residues; that stretch reads PQVTVTGPSRDCPNSG. Residues 686–706 show a composition bias toward low complexity; the sequence is QASPCASEQSPSPQSPQNNCS. The region spanning 719 to 769 is the bHLH domain; sequence NRQMKHISAEQKRRFNIKMCFDMLNSLISNNSKLTSHAITLQKTVEYITKL. The interval 769-790 is leucine-zipper; that stretch reads LQQERGQMQEEARRLREEIEEL. A mediates heterotypic interactions between MLXIP and MLX and is required for cytoplasmic localization region spans residues 832–881; sequence WKFWIFSIIIKPLFESFKGMVSTSSLEELHRTALSWLDQHCSLPILRPMV.

In terms of assembly, efficient DNA binding requires dimerization with another bHLH protein. Binds DNA as a homodimer or a heterodimer with MLX. As to expression, widely expressed in adult tissues. Most abundant in skeletal muscle.

It is found in the cytoplasm. It localises to the nucleus. Its subcellular location is the mitochondrion outer membrane. Its function is as follows. Binds DNA as a heterodimer with MLX and activates transcription. Binds to the canonical E box sequence 5'-CACGTG-3'. Plays a role in transcriptional activation of glycolytic target genes. Involved in glucose-responsive gene regulation. The protein is MLX-interacting protein of Homo sapiens (Human).